Consider the following 162-residue polypeptide: Large ribosomal subunit protein uL10 (162 aa).

This sequence belongs to the universal ribosomal protein uL10 family. As to quaternary structure, part of the ribosomal stalk of the 50S ribosomal subunit. The N-terminus interacts with L11 and the large rRNA to form the base of the stalk. The C-terminus forms an elongated spine to which L12 dimers bind in a sequential fashion forming a multimeric L10(L12)X complex.

Forms part of the ribosomal stalk, playing a central role in the interaction of the ribosome with GTP-bound translation factors. This is Large ribosomal subunit protein uL10 from Vibrio vulnificus (strain CMCP6).